The primary structure comprises 476 residues: Monodehydroascorbate reductase 2, peroxisomal (476 aa).

The Cytoplasmic portion of the chain corresponds to 1 to 3 (MGR). The chain crosses the membrane as a helical span at residues 4–24 (AFVHVILGGGVAAGYAALEFA). Residues 12-15 (GGVA), Glu-40, Arg-47, Lys-52, and 146-147 (RN) contribute to the FAD site. Residues 25 to 447 (RRGGYSRGEL…GGLALGEKPT (423 aa)) lie on the Peroxisomal side of the membrane. Residues 171–177 (GGYIGME), Glu-195, Arg-201, and Gly-260 each bind NAD(+). 173–177 (YIGME) provides a ligand contact to NADP(+). NADP(+) is bound by residues Arg-201 and Gly-260. Asp-297 provides a ligand contact to FAD. 314-315 (EH) is an NAD(+) binding site. Residue 314–315 (EH) participates in NADP(+) binding. Position 316 (Val-316) interacts with FAD. Arg-320 contacts L-ascorbate. Tyr-346 is a binding site for FAD. Position 346 (Tyr-346) interacts with NAD(+). Tyr-346 contacts NADP(+). Arg-348 lines the L-ascorbate pocket. Residues 448-468 (YVWHATAGVIAAASIAAFGYW) form a helical membrane-spanning segment. The Cytoplasmic segment spans residues 469-476 (YGRKRRRW).

It belongs to the FAD-dependent oxidoreductase family. The cofactor is FAD.

The protein localises to the peroxisome membrane. It catalyses the reaction 2 monodehydro-L-ascorbate radical + NADH + H(+) = 2 L-ascorbate + NAD(+). Functionally, catalyzes the conversion of monodehydroascorbate to ascorbate, oxidizing NADH in the process. Ascorbate is a major antioxidant against reactive oxygen species (ROS) and nitric oxide (NO). The chain is Monodehydroascorbate reductase 2, peroxisomal from Oryza sativa subsp. japonica (Rice).